Reading from the N-terminus, the 524-residue chain is Cytochrome P450 4F3 (524 aa).

A helical membrane pass occupies residues 19–39 (WLLLLLAGASCLLAYILTPIY). Residue Cys468 coordinates heme.

Belongs to the cytochrome P450 family. It depends on heme as a cofactor. Highest level in polymorphonuclear leukocytes and dendritic cells. Detectable in lymph nodes, spleen, bone marrow and peripheral blood. Highly expressed in ovary. Very low level in liver, kidney, and smooth muscle. Expressed in neutrophils (at protein level).

The protein localises to the endoplasmic reticulum membrane. It is found in the microsome membrane. The enzyme catalyses leukotriene B4 + reduced [NADPH--hemoprotein reductase] + O2 = 18-hydroxy-leukotriene B4 + oxidized [NADPH--hemoprotein reductase] + H2O + H(+). The catalysed reaction is leukotriene B4 + reduced [NADPH--hemoprotein reductase] + O2 = 19-hydroxy-leukotriene B4 + oxidized [NADPH--hemoprotein reductase] + H2O + H(+). It functions in the pathway lipid metabolism; leukotriene B4 degradation. A cytochrome P450 monooxygenase involved in the metabolism of the pro-inflammatory lipid mediator leukotriene B4 (LTB4). Hydroxylates at the omega-1 and omega-2 positions LTB4. This oxidation step leads to LTB4 inactivation, which is postulated to be a crucial part of the resolution of inflammation. Mechanistically, uses molecular oxygen inserting one oxygen atom into a substrate, and reducing the second into a water molecule, with two electrons provided by NADPH via cytochrome P450 reductase (CPR; NADPH-ferrihemoprotein reductase). This chain is Cytochrome P450 4F3, found in Mus musculus (Mouse).